The sequence spans 250 residues: UPF0494 membrane protein PB2B2.07c (250 aa).

The next 3 membrane-spanning stretches (helical) occupy residues 98–118 (WPLL…NFEV), 144–164 (IAIY…MFPL), and 179–199 (MIIA…GATI).

This sequence belongs to the UPF0494 family.

The protein localises to the cytoplasm. The protein resides in the endoplasmic reticulum. It is found in the golgi apparatus. It localises to the membrane. This is UPF0494 membrane protein PB2B2.07c from Schizosaccharomyces pombe (strain 972 / ATCC 24843) (Fission yeast).